The primary structure comprises 70 residues: Large ribosomal subunit protein eL38 (70 aa).

This sequence belongs to the eukaryotic ribosomal protein eL38 family.

In Anopheles gambiae (African malaria mosquito), this protein is Large ribosomal subunit protein eL38 (RpL38).